The sequence spans 1463 residues: DNA-directed RNA polymerase subunit beta'' (1463 aa).

Residues cysteine 239, cysteine 312, cysteine 319, and cysteine 322 each contribute to the Zn(2+) site. 2 disordered regions span residues 836–869 (TFTGEEKQEGNKPVEITSKNRRKSAANSSHETRM) and 987–1007 (TNRSKTRRNASGKTQVKAQAR). Over residues 860 to 869 (AANSSHETRM) the composition is skewed to polar residues. The segment covering 987–996 (TNRSKTRRNA) has biased composition (basic residues). Residues 997 to 1007 (SGKTQVKAQAR) show a composition bias toward polar residues.

Belongs to the RNA polymerase beta' chain family. RpoC2 subfamily. In terms of assembly, in plastids the minimal PEP RNA polymerase catalytic core is composed of four subunits: alpha, beta, beta', and beta''. When a (nuclear-encoded) sigma factor is associated with the core the holoenzyme is formed, which can initiate transcription. Requires Zn(2+) as cofactor.

Its subcellular location is the plastid. It is found in the chloroplast. It carries out the reaction RNA(n) + a ribonucleoside 5'-triphosphate = RNA(n+1) + diphosphate. In terms of biological role, DNA-dependent RNA polymerase catalyzes the transcription of DNA into RNA using the four ribonucleoside triphosphates as substrates. This Nephroselmis olivacea (Green alga) protein is DNA-directed RNA polymerase subunit beta''.